A 456-amino-acid polypeptide reads, in one-letter code: tRNA modification GTPase MnmE (456 aa).

Residues arginine 23, glutamate 85, and arginine 124 each coordinate (6S)-5-formyl-5,6,7,8-tetrahydrofolate. The region spanning 220-375 (GLRVLIFGKP…LVSAIQERFV (156 aa)) is the TrmE-type G domain. Position 230 (asparagine 230) interacts with K(+). Residues 230-235 (NVGKSS), 249-255 (TDIPGTT), and 274-277 (DTAG) contribute to the GTP site. Serine 234 is a Mg(2+) binding site. Residues threonine 249, isoleucine 251, and threonine 254 each contribute to the K(+) site. Threonine 255 contributes to the Mg(2+) binding site. Lysine 456 is a (6S)-5-formyl-5,6,7,8-tetrahydrofolate binding site.

This sequence belongs to the TRAFAC class TrmE-Era-EngA-EngB-Septin-like GTPase superfamily. TrmE GTPase family. Homodimer. Heterotetramer of two MnmE and two MnmG subunits. It depends on K(+) as a cofactor.

It localises to the cytoplasm. In terms of biological role, exhibits a very high intrinsic GTPase hydrolysis rate. Involved in the addition of a carboxymethylaminomethyl (cmnm) group at the wobble position (U34) of certain tRNAs, forming tRNA-cmnm(5)s(2)U34. The polypeptide is tRNA modification GTPase MnmE (Syntrophotalea carbinolica (strain DSM 2380 / NBRC 103641 / GraBd1) (Pelobacter carbinolicus)).